A 94-amino-acid chain; its full sequence is Small ribosomal subunit protein uS19 (94 aa).

The protein belongs to the universal ribosomal protein uS19 family.

Its function is as follows. Protein S19 forms a complex with S13 that binds strongly to the 16S ribosomal RNA. In Carboxydothermus hydrogenoformans (strain ATCC BAA-161 / DSM 6008 / Z-2901), this protein is Small ribosomal subunit protein uS19.